The primary structure comprises 992 residues: Ankyrin repeat domain-containing protein 18A (992 aa).

5 ANK repeats span residues 67–96 (KDRT…QIDI), 100–129 (LNRT…NPNI), 133–162 (YGNT…NIEA), 166–195 (EGNT…NIHA), and 199–228 (FKRT…RISS). The tract at residues 262–320 (NHLRNDNQETAAMKPANLKKRKERAKAEHNLKVASEEKQERLQRSENKQPQDSQSYGKK) is disordered. Coiled coils occupy residues 278 to 310 (NLKK…ENKQ), 378 to 618 (KMIT…AERE), 683 to 713 (ISLL…CLEM), and 743 to 899 (FKKL…EAFA). The span at 286–310 (AKAEHNLKVASEEKQERLQRSENKQ) shows a compositional bias: basic and acidic residues.

This is Ankyrin repeat domain-containing protein 18A (ANKRD18A) from Homo sapiens (Human).